The primary structure comprises 549 residues: Hydroxylamine reductase (549 aa).

[4Fe-4S] cluster-binding residues include cysteine 5, cysteine 8, cysteine 17, and cysteine 23. Residues histidine 244, glutamate 268, cysteine 312, cysteine 403, cysteine 431, cysteine 456, glutamate 491, and lysine 493 each coordinate hybrid [4Fe-2O-2S] cluster. Cysteine 403 is modified (cysteine persulfide).

Belongs to the HCP family. [4Fe-4S] cluster serves as cofactor. It depends on hybrid [4Fe-2O-2S] cluster as a cofactor.

It localises to the cytoplasm. The catalysed reaction is A + NH4(+) + H2O = hydroxylamine + AH2 + H(+). In terms of biological role, catalyzes the reduction of hydroxylamine to form NH(3) and H(2)O. The protein is Hydroxylamine reductase of Clostridium perfringens (strain 13 / Type A).